Consider the following 428-residue polypeptide: Serine--tRNA ligase (428 aa).

235–237 (TAE) is an L-serine binding site. 266 to 268 (RSE) serves as a coordination point for ATP. E289 is an L-serine binding site. 353 to 356 (EISS) lines the ATP pocket. Residue S389 coordinates L-serine.

This sequence belongs to the class-II aminoacyl-tRNA synthetase family. Type-1 seryl-tRNA synthetase subfamily. Homodimer. The tRNA molecule binds across the dimer.

Its subcellular location is the cytoplasm. The enzyme catalyses tRNA(Ser) + L-serine + ATP = L-seryl-tRNA(Ser) + AMP + diphosphate + H(+). It catalyses the reaction tRNA(Sec) + L-serine + ATP = L-seryl-tRNA(Sec) + AMP + diphosphate + H(+). It functions in the pathway aminoacyl-tRNA biosynthesis; selenocysteinyl-tRNA(Sec) biosynthesis; L-seryl-tRNA(Sec) from L-serine and tRNA(Sec): step 1/1. Catalyzes the attachment of serine to tRNA(Ser). Is also able to aminoacylate tRNA(Sec) with serine, to form the misacylated tRNA L-seryl-tRNA(Sec), which will be further converted into selenocysteinyl-tRNA(Sec). The protein is Serine--tRNA ligase of Psychromonas ingrahamii (strain DSM 17664 / CCUG 51855 / 37).